The sequence spans 129 residues: Phosphoribosyl-AMP cyclohydrolase (129 aa).

D85 is a binding site for Mg(2+). C86 is a Zn(2+) binding site. Positions 87 and 89 each coordinate Mg(2+). Residues C102 and C109 each coordinate Zn(2+).

The protein belongs to the PRA-CH family. In terms of assembly, homodimer. Requires Mg(2+) as cofactor. It depends on Zn(2+) as a cofactor.

The protein resides in the cytoplasm. The enzyme catalyses 1-(5-phospho-beta-D-ribosyl)-5'-AMP + H2O = 1-(5-phospho-beta-D-ribosyl)-5-[(5-phospho-beta-D-ribosylamino)methylideneamino]imidazole-4-carboxamide. It functions in the pathway amino-acid biosynthesis; L-histidine biosynthesis; L-histidine from 5-phospho-alpha-D-ribose 1-diphosphate: step 3/9. In terms of biological role, catalyzes the hydrolysis of the adenine ring of phosphoribosyl-AMP. The protein is Phosphoribosyl-AMP cyclohydrolase of Methanococcus maripaludis (strain C7 / ATCC BAA-1331).